Reading from the N-terminus, the 441-residue chain is uncharacterized protein (441 aa).

Residue 57–64 (GVRRGGKT) participates in ATP binding.

This is an uncharacterized protein from Methanocaldococcus jannaschii (strain ATCC 43067 / DSM 2661 / JAL-1 / JCM 10045 / NBRC 100440) (Methanococcus jannaschii).